Here is a 204-residue protein sequence, read N- to C-terminus: Ribosome maturation factor RimP (204 aa).

A disordered region spans residues 176-204 (GNFDESQFDEIEESEGEEADEAEQPPTKH). Residues 181 to 198 (SQFDEIEESEGEEADEAE) are compositionally biased toward acidic residues.

It belongs to the RimP family.

The protein resides in the cytoplasm. In terms of biological role, required for maturation of 30S ribosomal subunits. The polypeptide is Ribosome maturation factor RimP (Cereibacter sphaeroides (strain ATCC 17029 / ATH 2.4.9) (Rhodobacter sphaeroides)).